Here is a 419-residue protein sequence, read N- to C-terminus: MSISGIKGMNDILPSDVETWQFLEREAHRIFKLYGFAEIRVPVVEKTELFCRSIGETTDIVEKEMYTFDDRSSNSLTLRPEGTAPVMRSFIEHKLHALDPVSKLYYMGPMFRYERPQKGRYRQFHQIGAEAIGVDDPMMDAQVLAMLCHYFDAVGIDNVELHVNSLGCQECRPQYRQALTGYLESRLDKLCADCQRRYQTNPLRVLDCKVPACQEATKDAPSVLDLLCSGCNDHFAQVRQHLQELQIDYTINARMVRGLDYYTKTTFEMVTNQLGSQNAVAAGGRYDGLIKELGGPALPGIGFAMGVERLVLMKGEQQVQPPRPDVFLAALGEAAGQKAFALMYRLQRLDLRAEMAFTGKSLKAQMRRAGKLNARYVLMLGEEELASGQAQLRDMDNGSQEPIALEGIEQALLEKTRGN.

This sequence belongs to the class-II aminoacyl-tRNA synthetase family. Homodimer.

It is found in the cytoplasm. It catalyses the reaction tRNA(His) + L-histidine + ATP = L-histidyl-tRNA(His) + AMP + diphosphate + H(+). In Syntrophotalea carbinolica (strain DSM 2380 / NBRC 103641 / GraBd1) (Pelobacter carbinolicus), this protein is Histidine--tRNA ligase.